Here is a 94-residue protein sequence, read N- to C-terminus: Gene 4.5 protein (94 aa).

The chain is Gene 4.5 protein (4.5) from Enterobacteria phage T3 (Bacteriophage T3).